Reading from the N-terminus, the 226-residue chain is ATP synthase F(0) complex subunit a (226 aa).

The next 6 membrane-spanning stretches (helical) occupy residues 6–26, 68–88, 97–117, 138–158, 164–184, and 189–209; these read FASFITPMMFGLPLVTLIVLF, WALMLMSLILFIGSTNLLGLL, QLSMNLGMAIPLWGGAVITGF, IPMLVIIETISLFIQPVALAV, ITAGHLLIHLIGGATLALMSI, and ALITFIILILLTVLEFAVAMI.

The protein belongs to the ATPase A chain family. As to quaternary structure, component of the ATP synthase complex composed at least of ATP5F1A/subunit alpha, ATP5F1B/subunit beta, ATP5MC1/subunit c (homooctomer), MT-ATP6/subunit a, MT-ATP8/subunit 8, ATP5ME/subunit e, ATP5MF/subunit f, ATP5MG/subunit g, ATP5MK/subunit k, ATP5MJ/subunit j, ATP5F1C/subunit gamma, ATP5F1D/subunit delta, ATP5F1E/subunit epsilon, ATP5PF/subunit F6, ATP5PB/subunit b, ATP5PD/subunit d, ATP5PO/subunit OSCP. ATP synthase complex consists of a soluble F(1) head domain (subunits alpha(3) and beta(3)) - the catalytic core - and a membrane F(0) domain - the membrane proton channel (subunits c, a, 8, e, f, g, k and j). These two domains are linked by a central stalk (subunits gamma, delta, and epsilon) rotating inside the F1 region and a stationary peripheral stalk (subunits F6, b, d, and OSCP). Interacts with DNAJC30; interaction is direct.

The protein resides in the mitochondrion inner membrane. The catalysed reaction is H(+)(in) = H(+)(out). Subunit a, of the mitochondrial membrane ATP synthase complex (F(1)F(0) ATP synthase or Complex V) that produces ATP from ADP in the presence of a proton gradient across the membrane which is generated by electron transport complexes of the respiratory chain. ATP synthase complex consist of a soluble F(1) head domain - the catalytic core - and a membrane F(1) domain - the membrane proton channel. These two domains are linked by a central stalk rotating inside the F(1) region and a stationary peripheral stalk. During catalysis, ATP synthesis in the catalytic domain of F(1) is coupled via a rotary mechanism of the central stalk subunits to proton translocation. With the subunit c (ATP5MC1), forms the proton-conducting channel in the F(0) domain, that contains two crucial half-channels (inlet and outlet) that facilitate proton movement from the mitochondrial intermembrane space (IMS) into the matrix. Protons are taken up via the inlet half-channel and released through the outlet half-channel, following a Grotthuss mechanism. The polypeptide is ATP synthase F(0) complex subunit a (Ovis aries (Sheep)).